A 497-amino-acid polypeptide reads, in one-letter code: Peptidoglycan endopeptidase RipA (497 aa).

The signal sequence occupies residues 1–39; the sequence is MRRTVRALATRVHGRVCAVPLVVGMLLATALYGGGPAAA. Positions 177–192 are enriched in basic and acidic residues; the sequence is ARLAKEKADQAARDAE. Disordered stretches follow at residues 177–198 and 253–297; these read ARLAKEKADQAARDAESSQDNA and APAA…GQNW. The segment covering 255-273 has biased composition (pro residues); sequence AAAPAPVPNSAPAPVPGAQ. The 133-residue stretch at 365–497 folds into the NlpC/P60 domain; sequence REAVEYVIRR…TPYVTRLIEY (133 aa). C408 serves as the catalytic Nucleophile. The Proton acceptor role is filled by H457. E469 is an active-site residue.

The protein belongs to the peptidase C40 family. In terms of assembly, monomer.

The protein localises to the secreted. Functionally, peptidoglycan endopeptidase that cleaves the bond between D-glutamate and meso-diaminopimelate. Binds and degrades high-molecular weight peptidoglycan. Required for normal separation of daughter cells after cell division and for cell wall integrity. The chain is Peptidoglycan endopeptidase RipA (ripA) from Mycolicibacterium smegmatis (strain ATCC 700084 / mc(2)155) (Mycobacterium smegmatis).